The chain runs to 349 residues: Protein Wnt-7b (349 aa).

An N-terminal signal peptide occupies residues 1–24 (MHRNFRKWIFYVFLCFGVLYVKLG). Intrachain disulfides connect Cys-73–Cys-84, Cys-123–Cys-131, Cys-133–Cys-152, Cys-200–Cys-214, and Cys-202–Cys-209. Asn-83 and Asn-127 each carry an N-linked (GlcNAc...) asparagine glycan. Ser-206 is lipidated: O-palmitoleoyl serine; by PORCN. The tract at residues 238 to 266 (VEVVRASRLRQPTFLRIKQLRSYQKPMET) is disordered linker. 6 cysteine pairs are disulfide-bonded: Cys-278–Cys-309, Cys-294–Cys-304, Cys-308–Cys-348, Cys-324–Cys-339, Cys-326–Cys-336, and Cys-331–Cys-332. An N-linked (GlcNAc...) asparagine glycan is attached at Asn-295.

The protein belongs to the Wnt family. In terms of assembly, forms a soluble 1:1 complex with AFM; this prevents oligomerization and is required for prolonged biological activity. The complex with AFM may represent the physiological form in body fluids. Interacts with FZD1 and FZD10. Interacts with FZD4 (in vitro). Interacts with PORCN. Interacts with glypican GPC3. Interacts (via intrinsically disordered linker region) with RECK; interaction with RECK confers ligand selectivity for Wnt7 in brain endothelial cells and allows these cells to selectively respond to Wnt7. Palmitoleoylation is required for efficient binding to frizzled receptors. Depalmitoleoylation leads to Wnt signaling pathway inhibition. As to expression, moderately expressed in fetal brain, weakly expressed in fetal lung and kidney, and faintly expressed in adult brain, lung and prostate.

The protein localises to the secreted. It is found in the extracellular space. The protein resides in the extracellular matrix. Ligand for members of the frizzled family of seven transmembrane receptors that functions in the canonical Wnt/beta-catenin signaling pathway. Required for normal fusion of the chorion and the allantois during placenta development. Required for central nervous system (CNS) angiogenesis and blood-brain barrier regulation. This Homo sapiens (Human) protein is Protein Wnt-7b (WNT7B).